Consider the following 382-residue polypeptide: Mannitol-1-phosphate 5-dehydrogenase (382 aa).

An NAD(+)-binding site is contributed by alanine 3–glycine 14.

It belongs to the mannitol dehydrogenase family.

It catalyses the reaction D-mannitol 1-phosphate + NAD(+) = beta-D-fructose 6-phosphate + NADH + H(+). The polypeptide is Mannitol-1-phosphate 5-dehydrogenase (Salmonella paratyphi A (strain ATCC 9150 / SARB42)).